A 457-amino-acid polypeptide reads, in one-letter code: MREIIHISTGQCGNQIGAAFWETICGEHGLDFNGTYHGHDDIQKERLNVYFNEASSGKWVPRSINVDLEPGTIDAVRNSAIGNLFRPDNYIFGQSSAGNVWAKGHYTEGAELVDSVMDVIRREAEGCDSLQGFQITHSLGGGTGSGMGTLLISKIREEFPDRMMATFSVLPSPKTSDTVVEPYNATLSVHQLVEHSDETFCIDNEALYDICQRTLKLNQPSYGDLNNLVSSVMSGVTTSLRYPGQLNSDLRKLAVNLVPFPRLHFFMVGYAPLTAIGSQSFRSLTVPELTQQMFDAKNMMAAADPRNGRYLTVAAFFRGKVSVKEVEDEMHKVQSKNSDYFVEWIPNNVQTAVCSVAPQGLDMAATFIANSTSIQELFKRVGDQFSAMFKRKAFLHWYTSEGMDELEFSEAESNMNDLVSEYQQYQEATVEDDEEVDENGDFGAPQNQDEPITENFE.

The GTP site is built by glutamine 11, glutamate 69, serine 138, glycine 142, threonine 143, glycine 144, asparagine 204, and asparagine 226. Residue glutamate 69 coordinates Mg(2+). 2 positions are modified to phosphoserine: serine 278 and serine 280. The tract at residues 423–457 (QQYQEATVEDDEEVDENGDFGAPQNQDEPITENFE) is disordered. The span at 429 to 440 (TVEDDEEVDENG) shows a compositional bias: acidic residues.

Belongs to the tubulin family. As to quaternary structure, dimer of alpha and beta chains. A typical microtubule is a hollow water-filled tube with an outer diameter of 25 nm and an inner diameter of 15 nM. Alpha-beta heterodimers associate head-to-tail to form protofilaments running lengthwise along the microtubule wall with the beta-tubulin subunit facing the microtubule plus end conferring a structural polarity. Microtubules usually have 13 protofilaments but different protofilament numbers can be found in some organisms and specialized cells. It depends on Mg(2+) as a cofactor.

Its subcellular location is the cytoplasm. It is found in the cytoskeleton. Tubulin is the major constituent of microtubules, a cylinder consisting of laterally associated linear protofilaments composed of alpha- and beta-tubulin heterodimers. Microtubules grow by the addition of GTP-tubulin dimers to the microtubule end, where a stabilizing cap forms. Below the cap, tubulin dimers are in GDP-bound state, owing to GTPase activity of alpha-tubulin. The protein is Tubulin beta chain (TUB2) of Saccharomyces cerevisiae (strain ATCC 204508 / S288c) (Baker's yeast).